Consider the following 276-residue polypeptide: Dermonecrotic toxin LlSicTox-alphaIV1ii (276 aa).

Residue H5 is part of the active site. Mg(2+) is bound by residues E25 and D27. The active-site Nucleophile is the H41. Cystine bridges form between C45–C51 and C47–C193. D85 contributes to the Mg(2+) binding site.

Belongs to the arthropod phospholipase D family. Class II subfamily. The cofactor is Mg(2+). In terms of tissue distribution, expressed by the venom gland.

It localises to the secreted. The enzyme catalyses an N-(acyl)-sphingosylphosphocholine = an N-(acyl)-sphingosyl-1,3-cyclic phosphate + choline. It catalyses the reaction an N-(acyl)-sphingosylphosphoethanolamine = an N-(acyl)-sphingosyl-1,3-cyclic phosphate + ethanolamine. It carries out the reaction a 1-acyl-sn-glycero-3-phosphocholine = a 1-acyl-sn-glycero-2,3-cyclic phosphate + choline. The catalysed reaction is a 1-acyl-sn-glycero-3-phosphoethanolamine = a 1-acyl-sn-glycero-2,3-cyclic phosphate + ethanolamine. Dermonecrotic toxins cleave the phosphodiester linkage between the phosphate and headgroup of certain phospholipids (sphingolipid and lysolipid substrates), forming an alcohol (often choline) and a cyclic phosphate. This toxin acts on sphingomyelin (SM). It may also act on ceramide phosphoethanolamine (CPE), lysophosphatidylcholine (LPC) and lysophosphatidylethanolamine (LPE), but not on lysophosphatidylserine (LPS), and lysophosphatidylglycerol (LPG). It acts by transphosphatidylation, releasing exclusively cyclic phosphate products as second products. Induces dermonecrosis, hemolysis, increased vascular permeability, edema, inflammatory response, and platelet aggregation. The polypeptide is Dermonecrotic toxin LlSicTox-alphaIV1ii (Loxosceles laeta (South American recluse spider)).